The sequence spans 632 residues: 1-deoxy-D-xylulose-5-phosphate synthase (632 aa).

Thiamine diphosphate is bound by residues His87 and 128 to 130 (GHS). A Mg(2+)-binding site is contributed by Asp159. Thiamine diphosphate is bound by residues 160–161 (GA), Asn188, Phe295, and Glu377. Asn188 is a Mg(2+) binding site.

The protein belongs to the transketolase family. DXPS subfamily. As to quaternary structure, homodimer. It depends on Mg(2+) as a cofactor. Thiamine diphosphate is required as a cofactor.

The catalysed reaction is D-glyceraldehyde 3-phosphate + pyruvate + H(+) = 1-deoxy-D-xylulose 5-phosphate + CO2. Its pathway is metabolic intermediate biosynthesis; 1-deoxy-D-xylulose 5-phosphate biosynthesis; 1-deoxy-D-xylulose 5-phosphate from D-glyceraldehyde 3-phosphate and pyruvate: step 1/1. Functionally, catalyzes the acyloin condensation reaction between C atoms 2 and 3 of pyruvate and glyceraldehyde 3-phosphate to yield 1-deoxy-D-xylulose-5-phosphate (DXP). The polypeptide is 1-deoxy-D-xylulose-5-phosphate synthase (Stutzerimonas stutzeri (strain A1501) (Pseudomonas stutzeri)).